The sequence spans 303 residues: Acidic endochitinase WIN6.2B (303 aa).

The signal sequence occupies residues 1–21; the sequence is MSVWAFAFFSLFLSLSVRGSA. Positions 22-62 constitute a Chitin-binding type-1 domain; the sequence is EQCGQQAGDALCPGGLCCSSYGWCGTTADYCGDGCQSQCDG. 4 disulfide bridges follow: C24/C39, C33/C45, C38/C52, and C56/C60. The segment at 82–303 is chitinase; the sequence is DGYLSDIIPE…YGLLGLKDTM (222 aa). The active-site Proton donor is the E150. The cysteines at positions 253 and 286 are disulfide-linked.

The protein belongs to the glycosyl hydrolase 19 family. Chitinase class I subfamily.

The enzyme catalyses Random endo-hydrolysis of N-acetyl-beta-D-glucosaminide (1-&gt;4)-beta-linkages in chitin and chitodextrins.. Its function is as follows. Defense against chitin-containing fungal pathogens. The protein is Acidic endochitinase WIN6.2B of Populus trichocarpa (Western balsam poplar).